The chain runs to 166 residues: Small ribosomal subunit protein uS5 (166 aa).

Residues 11-74 (LQEKLIAVNR…EQAKRNLNKV (64 aa)) enclose the S5 DRBM domain.

The protein belongs to the universal ribosomal protein uS5 family. In terms of assembly, part of the 30S ribosomal subunit. Contacts proteins S4 and S8.

In terms of biological role, with S4 and S12 plays an important role in translational accuracy. Located at the back of the 30S subunit body where it stabilizes the conformation of the head with respect to the body. The chain is Small ribosomal subunit protein uS5 from Aeromonas hydrophila subsp. hydrophila (strain ATCC 7966 / DSM 30187 / BCRC 13018 / CCUG 14551 / JCM 1027 / KCTC 2358 / NCIMB 9240 / NCTC 8049).